The primary structure comprises 345 residues: Protein RecA (345 aa).

ATP is bound at residue 65–72 (GPESSGKT).

Belongs to the RecA family.

It localises to the cytoplasm. In terms of biological role, can catalyze the hydrolysis of ATP in the presence of single-stranded DNA, the ATP-dependent uptake of single-stranded DNA by duplex DNA, and the ATP-dependent hybridization of homologous single-stranded DNAs. It interacts with LexA causing its activation and leading to its autocatalytic cleavage. This is Protein RecA from Colwellia psychrerythraea (strain 34H / ATCC BAA-681) (Vibrio psychroerythus).